The primary structure comprises 371 residues: Protein NDRG2 (371 aa).

The interval 1–21 (MAELQEVQITEEKPLLPGQTP) is disordered. At Ala2 the chain carries N-acetylalanine. At Thr20 the chain carries Phosphothreonine. Phosphoserine is present on residues Ser326 and Ser328. Residue Thr330 is modified to Phosphothreonine. Residue Ser332 is modified to Phosphoserine. The residue at position 334 (Thr334) is a Phosphothreonine. The segment at 334–371 (TSAASVDGNRSRSRTLSQSSESGTLSSGPPGHTMEVSC) is disordered. Phosphoserine is present on residues Ser335, Ser338, and Ser344. Low complexity predominate over residues 347-361 (RTLSQSSESGTLSSG). Thr348 is subject to Phosphothreonine. Residues Ser350, Ser352, Ser353, and Ser355 each carry the phosphoserine modification. Thr357 bears the Phosphothreonine mark. Ser370 is subject to Phosphoserine.

This sequence belongs to the NDRG family. In terms of assembly, interacts with CTNNB1. Highly expressed in brain, heart, skeletal muscle and salivary gland, and moderately in kidney and liver. Expressed in dendritic cells, but not in other blood cells. Expression levels are low in pancreatic and liver cancer tissues; absent in meningioma. Expressed in low-grade gliomas but present at low levels in glioblastoma. Isoform 1 and isoform 2 are present in brain neurons and up-regulated in Alzheimer disease (at protein level).

It is found in the cytoplasm. The protein localises to the perinuclear region. Its subcellular location is the cell projection. The protein resides in the growth cone. Functionally, contributes to the regulation of the Wnt signaling pathway. Down-regulates CTNNB1-mediated transcriptional activation of target genes, such as CCND1, and may thereby act as tumor suppressor. May be involved in dendritic cell and neuron differentiation. In Homo sapiens (Human), this protein is Protein NDRG2 (NDRG2).